A 65-amino-acid chain; its full sequence is DNA-directed RNA polymerase subunit Rpo10 (65 aa).

Zn(2+)-binding residues include Cys-7, Cys-10, Cys-44, and Cys-45.

The protein belongs to the archaeal Rpo10/eukaryotic RPB10 RNA polymerase subunit family. Part of the RNA polymerase complex. Requires Zn(2+) as cofactor.

It localises to the cytoplasm. The protein localises to the chromosome. It catalyses the reaction RNA(n) + a ribonucleoside 5'-triphosphate = RNA(n+1) + diphosphate. DNA-dependent RNA polymerase (RNAP) catalyzes the transcription of DNA into RNA using the four ribonucleoside triphosphates as substrates. This is DNA-directed RNA polymerase subunit Rpo10 from Thermococcus kodakarensis (strain ATCC BAA-918 / JCM 12380 / KOD1) (Pyrococcus kodakaraensis (strain KOD1)).